A 439-amino-acid polypeptide reads, in one-letter code: Glutamate-1-semialdehyde 2,1-aminomutase (439 aa).

Lys-270 bears the N6-(pyridoxal phosphate)lysine mark.

It belongs to the class-III pyridoxal-phosphate-dependent aminotransferase family. HemL subfamily. In terms of assembly, homodimer. The cofactor is pyridoxal 5'-phosphate.

The protein resides in the cytoplasm. The catalysed reaction is (S)-4-amino-5-oxopentanoate = 5-aminolevulinate. The protein operates within porphyrin-containing compound metabolism; protoporphyrin-IX biosynthesis; 5-aminolevulinate from L-glutamyl-tRNA(Glu): step 2/2. In Kocuria rhizophila (strain ATCC 9341 / DSM 348 / NBRC 103217 / DC2201), this protein is Glutamate-1-semialdehyde 2,1-aminomutase.